Here is an 84-residue protein sequence, read N- to C-terminus: Delta-stichotoxin-Sgt3a (84 aa).

The signal sequence occupies residues 1–19 (MAYLKIVLVALMLVVAVSA). Positions 20–33 (MRLSDQEDQDISVA) are excised as a propeptide. Intrachain disulfides connect C38/C78, C40/C68, and C61/C79. Residue G84 is a propeptide.

This sequence belongs to the sea anemone sodium channel inhibitory toxin family. Type II subfamily.

The protein resides in the secreted. Its subcellular location is the nematocyst. Binds specifically to voltage-gated sodium channels (Nav), thereby delaying their inactivation during signal transduction. This is Delta-stichotoxin-Sgt3a from Stichodactyla gigantea (Giant carpet anemone).